Here is a 519-residue protein sequence, read N- to C-terminus: 2-isopropylmalate synthase (519 aa).

One can recognise a Pyruvate carboxyltransferase domain in the interval 12–274; that stretch reads VVIFDTTLRD…WCNVESTMLT (263 aa). Residues aspartate 21, histidine 209, histidine 211, and asparagine 245 each coordinate Mn(2+). The regulatory domain stretch occupies residues 398 to 519; that stretch reads KLSSLTVIAG…QRDVPAAAAS (122 aa).

This sequence belongs to the alpha-IPM synthase/homocitrate synthase family. LeuA type 1 subfamily. In terms of assembly, homodimer. It depends on Mn(2+) as a cofactor.

It is found in the cytoplasm. It catalyses the reaction 3-methyl-2-oxobutanoate + acetyl-CoA + H2O = (2S)-2-isopropylmalate + CoA + H(+). It participates in amino-acid biosynthesis; L-leucine biosynthesis; L-leucine from 3-methyl-2-oxobutanoate: step 1/4. Its function is as follows. Catalyzes the condensation of the acetyl group of acetyl-CoA with 3-methyl-2-oxobutanoate (2-ketoisovalerate) to form 3-carboxy-3-hydroxy-4-methylpentanoate (2-isopropylmalate). The sequence is that of 2-isopropylmalate synthase from Nitrobacter winogradskyi (strain ATCC 25391 / DSM 10237 / CIP 104748 / NCIMB 11846 / Nb-255).